We begin with the raw amino-acid sequence, 298 residues long: GTP cyclohydrolase FolE2 (298 aa).

The protein belongs to the GTP cyclohydrolase IV family.

The enzyme catalyses GTP + H2O = 7,8-dihydroneopterin 3'-triphosphate + formate + H(+). Its pathway is cofactor biosynthesis; 7,8-dihydroneopterin triphosphate biosynthesis; 7,8-dihydroneopterin triphosphate from GTP: step 1/1. In terms of biological role, converts GTP to 7,8-dihydroneopterin triphosphate. The polypeptide is GTP cyclohydrolase FolE2 (Xylella fastidiosa (strain M23)).